The chain runs to 208 residues: GATA transcription factor 20 (208 aa).

The GATA-type zinc-finger motif lies at 94 to 119 (CASCDTTSTPLWRNGPKGPKSLCNAC).

This sequence belongs to the type IV zinc-finger family. Class B subfamily.

Its subcellular location is the nucleus. In terms of biological role, transcriptional regulator that specifically binds 5'-GATA-3' or 5'-GAT-3' motifs within gene promoters. This chain is GATA transcription factor 20, found in Arabidopsis thaliana (Mouse-ear cress).